The sequence spans 27 residues: U1-poneritoxin-Na3a (27 aa).

Belongs to the ponericin-G family. In terms of tissue distribution, expressed by the venom gland.

Its subcellular location is the secreted. Has activity against some Gram-positive bacteria and S.cerevisiae. Has a non-hemolytic activity. In Neoponera apicalis (Ant), this protein is U1-poneritoxin-Na3a.